A 426-amino-acid polypeptide reads, in one-letter code: Probable imidazolonepropionase (426 aa).

Residues Tyr159 and His192 each contribute to the 4-imidazolone-5-propanoate site. Tyr159 provides a ligand contact to N-formimidoyl-L-glutamate. Residue His260 participates in Fe(3+) binding. Residue His260 coordinates Zn(2+). Glu263 is a 4-imidazolone-5-propanoate binding site. Position 334 (Asp334) interacts with Fe(3+). Asp334 is a Zn(2+) binding site. Asn336 contributes to the N-formimidoyl-L-glutamate binding site.

This sequence belongs to the metallo-dependent hydrolases superfamily. HutI family. Zn(2+) is required as a cofactor. Requires Fe(3+) as cofactor.

It catalyses the reaction 4-imidazolone-5-propanoate + H2O = N-formimidoyl-L-glutamate. The protein operates within amino-acid degradation; L-histidine degradation into L-glutamate; N-formimidoyl-L-glutamate from L-histidine: step 3/3. This chain is Probable imidazolonepropionase (AMDHD1), found in Homo sapiens (Human).